The primary structure comprises 122 residues: Large ribosomal subunit protein uL18 (122 aa).

The protein belongs to the universal ribosomal protein uL18 family. Part of the 50S ribosomal subunit; part of the 5S rRNA/L5/L18/L25 subcomplex. Contacts the 5S and 23S rRNAs.

In terms of biological role, this is one of the proteins that bind and probably mediate the attachment of the 5S RNA into the large ribosomal subunit, where it forms part of the central protuberance. This is Large ribosomal subunit protein uL18 from Leptospira interrogans serogroup Icterohaemorrhagiae serovar copenhageni (strain Fiocruz L1-130).